A 317-amino-acid chain; its full sequence is WD repeat-containing protein 82 (317 aa).

WD repeat units lie at residues 21-60 (ENTDKINAIDFAPNGEHLISCSEDDQIVIYDCEKGTQSRT), 107-146 (GHTKKVISLCISPVEDTFLSGSLDKTLRLWDLRSPNCQGL), 148-186 (HLSGRPIAAYDPEGLIFAAGVNSESIKLYDLRSFDKGPF), 194-233 (EKECDWTGLKFSRDGKTILISTNGSVIRLVDAFHGTPLQT), 238-278 (PNNK…KVSV), and 282-317 (DHPGPVQCVQFNPKYMMLASACTNMAFWLPTSEEGL).

This sequence belongs to the WD repeat SWD2 family. Component of the SET1 complex, composed at least of the catalytic subunit Set1, wds/WDR5, Wdr82, Rbbp5, ash2, Cfp1/CXXC1, hcf and Dpy-30L1. Interacts with male-specific lethal (MSL) histone acetyltransferase complex at least composed of mof, msl-1, msl-2 and msl-3. Interacts with su(sable).

Its subcellular location is the nucleus. Its function is as follows. Component of the SET1 complex that specifically di- and trimethylates 'Lys-4' of histone H3. Together with su(sable), part of a transcription termination checkpoint that promotes transcription termination of aberrant RNAs and their subsequent degradation by the nuclear exosome. In Drosophila melanogaster (Fruit fly), this protein is WD repeat-containing protein 82.